Here is a 447-residue protein sequence, read N- to C-terminus: Tryptophan 5-hydroxylase 1 (447 aa).

The ACT domain maps to 22 to 97 (TLIFSLENEV…TVLSVDSPDQ (76 aa)). Ser-61 carries the phosphoserine; by PKA modification. L-tryptophan contacts are provided by Tyr-238, Arg-260, and Thr-268. Residues His-275, His-280, and Glu-320 each coordinate Fe cation. L-tryptophan contacts are provided by Ser-339 and Ile-369.

This sequence belongs to the biopterin-dependent aromatic amino acid hydroxylase family. In terms of assembly, homotetramer. Interacts with DNAJC12. Fe(2+) is required as a cofactor. Post-translationally, ubiquitinated, leading to its degradation by the proteasome. Ubiquitinated is triggered by phosphorylation. In terms of processing, phosphorylated; triggering degradation by the proteasome.

The enzyme catalyses (6R)-L-erythro-5,6,7,8-tetrahydrobiopterin + L-tryptophan + O2 = 5-hydroxy-L-tryptophan + (4aS,6R)-4a-hydroxy-L-erythro-5,6,7,8-tetrahydrobiopterin. It participates in aromatic compound metabolism; serotonin biosynthesis; serotonin from L-tryptophan: step 1/2. Functionally, oxidizes L-tryptophan to 5-hydroxy-l-tryptophan in the rate-determining step of serotonin biosynthesis. This Mus musculus (Mouse) protein is Tryptophan 5-hydroxylase 1.